A 396-amino-acid chain; its full sequence is Corticosteroid-binding globulin (396 aa).

An N-terminal signal peptide occupies residues 1–22; sequence MSLALYTCLLWLCTSGLWTAQA. N-linked (GlcNAc...) asparagine glycans are attached at residues N88 and N216. Residue Q246 participates in cortisol binding. N-linked (GlcNAc...) asparagine glycosylation is present at N252. D278 is a cortisol binding site. N319 and N352 each carry an N-linked (GlcNAc...) asparagine glycan. Position 384 (W384) interacts with cortisol.

The protein belongs to the serpin family. In terms of tissue distribution, expressed by the liver; secreted in plasma.

The protein localises to the secreted. Its function is as follows. Major transport protein for glucocorticoids and progestins in the blood of almost all vertebrate species. The sequence is that of Corticosteroid-binding globulin (Serpina6) from Rattus norvegicus (Rat).